The following is a 208-amino-acid chain: Ribosomal RNA small subunit methyltransferase G (208 aa).

S-adenosyl-L-methionine-binding positions include glycine 73, leucine 78, 127-128 (VE), and arginine 141.

Belongs to the methyltransferase superfamily. RNA methyltransferase RsmG family.

Its subcellular location is the cytoplasm. The enzyme catalyses guanosine(527) in 16S rRNA + S-adenosyl-L-methionine = N(7)-methylguanosine(527) in 16S rRNA + S-adenosyl-L-homocysteine. Specifically methylates the N7 position of guanine in position 527 of 16S rRNA. The polypeptide is Ribosomal RNA small subunit methyltransferase G (Cereibacter sphaeroides (strain ATCC 17025 / ATH 2.4.3) (Rhodobacter sphaeroides)).